A 239-amino-acid chain; its full sequence is Fatty acid metabolism regulator protein (239 aa).

One can recognise an HTH gntR-type domain in the interval 6–74 (KGPASFAEKY…HGKPTRVNNF (69 aa)). The H-T-H motif DNA-binding region spans 34 to 53 (ERELSELIGVTRTTLREVLQ).

Homodimer.

It is found in the cytoplasm. In terms of biological role, multifunctional regulator of fatty acid metabolism. The protein is Fatty acid metabolism regulator protein of Shewanella pealeana (strain ATCC 700345 / ANG-SQ1).